A 473-amino-acid polypeptide reads, in one-letter code: Putative F-box/LRR-repeat protein At3g59170 (473 aa).

The region spanning 6–54 (KDMINVLPDALLCHILSFLTTKEAASTSLLSRRWRYLLAFVPNLEFDDS) is the F-box domain. 5 LRR repeats span residues 168–194 (TIKIRDGPFIDVKHVHLPKLKTLYLQS), 196–221 (MFDENDIGFRKLLSGCPVLEELVLDG), 229–254 (SFTVSVATLKRLTFCCQKMSSFGYMH), 333–364 (VLYLSPETLEVLTYCCKQIPIFENLSHLTIKS), and 365–390 (DPNVGWKPLTKLLKNSPKLETLVFQG).

This Arabidopsis thaliana (Mouse-ear cress) protein is Putative F-box/LRR-repeat protein At3g59170.